The chain runs to 505 residues: MSARITPQTPALQALRMRLHAQHQPVVLMRTDCHVCRAEGLAPRSQVLIIAGDRTVQALLYQIDSDLLKTGQIALSEAAWDALDIHEGDLVQVRHPPLLESLSAVRARIHGHRLQTTELQAIVRDVVDGRYTDVALSAFLTATAVLPLDMQETIHLTRAMVDVGDHLQWQAPIVVDKHCVGGLPGNRTTPLVVAIAAANGLVMPKTSSRAITSPAGTADTMETLAPVDLDLDTLRKVVEKEGGCVAWGGAMHLSPADDIFVRIERELDIDTQGQLIASVLSKKIAAGATHIVIDIPVGPTAKVRSRETAEHLAHHLSEVAASFGLVLRCLFTDGNQPVGRGIGPALEARDVLAVLRNEADAPQDLCDRVALVAGAVLELGGVAKEGDGIRLAHETISSGRAWEKFQRICAAQGGFREPPQALYVEPLLATTTGRAVHIDNRKLSRLAKLAGAPESSAAGIQLQVRLGDEVTSGQPLMFLHAQTSGEMAYALAYVHDIGDIVNIEP.

This sequence belongs to the thymidine/pyrimidine-nucleoside phosphorylase family. Type 2 subfamily.

It catalyses the reaction thymidine + phosphate = 2-deoxy-alpha-D-ribose 1-phosphate + thymine. This chain is Putative thymidine phosphorylase, found in Tolumonas auensis (strain DSM 9187 / NBRC 110442 / TA 4).